Consider the following 123-residue polypeptide: uncharacterized protein (123 aa).

This is an uncharacterized protein from Homo sapiens (Human).